Reading from the N-terminus, the 698-residue chain is Sucrose non-fermenting protein kinase 1 (698 aa).

Positions 1–48 (MAPRGFEDEELTISLSSSHVRRPQQQQPPPPTQQQHAHQPGSRPADAP) are disordered. The Protein kinase domain maps to 62 to 313 (YKVLRTLGEG…IEDIRADPWF (252 aa)). ATP-binding positions include 68–76 (LGEGSFGKV) and Lys91. The Proton acceptor role is filled by Asp184. The interval 320 to 417 (YLQLPVEEFF…ALLEPEGSSP (98 aa)) is auto-inhibitory domain (AID). A UBA domain is found at 360-397 (VTEKISKTMGYGKNDVEEALQASEPSAIKDAYMIVREN). Disordered stretches follow at residues 410–435 (LEPEGSSPMLSMSSARSATSTTTTTA), 482–525 (TRTD…KKTK), and 564–597 (ESRHAEERAEASGNGSFADSYDGSRGSTTSIDPM). The segment covering 415–435 (SSPMLSMSSARSATSTTTTTA) has biased composition (low complexity). 2 stretches are compositionally biased toward basic and acidic residues: residues 484–493 (TDAEKEETSR) and 564–573 (ESRHAEERAE).

The protein belongs to the protein kinase superfamily. CAMK Ser/Thr protein kinase family. SNF1 subfamily. In terms of assembly, component of the AMP-activated protein kinase complex also known as the SNF1 kinase complex (Snf1c), a heterotrimeric complex composed of a catalytic subunit alpha and 2 regulatory subunits beta and gamma.

The protein resides in the cytoplasm. Its subcellular location is the nucleus. It carries out the reaction L-seryl-[protein] + ATP = O-phospho-L-seryl-[protein] + ADP + H(+). It catalyses the reaction L-threonyl-[protein] + ATP = O-phospho-L-threonyl-[protein] + ADP + H(+). Its function is as follows. Catalytic subunit of the AMP-activated protein kinase complex also known as the SNF1 kinase complex (Snf1c), a central regulator of cellular energy homeostasis, which, in response to a fall in intracellular ATP levels, activates energy-producing pathways and inhibits energy-consuming processes. The complex phosphorylates histone H3 to form H3S10ph, which promotes H3K14ac formation, leading to transcriptional activation through TBP recruitment to the promoters. Activates the expression of the galactose oxidase (GOA) gene and of several cell wall-degrading enzymes (CWDEs) such as pectate lyase, xylanase and glucanase. Plays an important role in sudden death syndrome (SDS) by controlling the colonization of the infected roots. In Fusarium virguliforme, this protein is Sucrose non-fermenting protein kinase 1.